A 243-amino-acid polypeptide reads, in one-letter code: Small ribosomal subunit protein uS3 (243 aa).

Ala2 carries the N-acetylalanine modification. A phosphoserine mark is found at Ser6 and Ser35. The KH type-2 domain maps to 21-92; the sequence is LNEFLTRELA…SVELYAEKVA (72 aa). Thr42 is modified (phosphothreonine). Lys62 carries the N6-acetyllysine modification. Asymmetric dimethylarginine occurs at positions 64, 65, and 67. Thr70 carries the phosphothreonine modification. Lys90 participates in a covalent cross-link: Glycyl lysine isopeptide (Lys-Gly) (interchain with G-Cter in ubiquitin). Ser104 carries the phosphoserine modification. Lys132 carries the post-translational modification N6-succinyllysine. Residues 200-243 are disordered; the sequence is PKKPLPDHVSIVEPKDEILPTTPISEQKGGKPEPPAMPQPVPTA. A Glycyl lysine isopeptide (Lys-Gly) (interchain with G-Cter in ubiquitin) cross-link involves residue Lys202. Ser209 is modified (phosphoserine). A Glycyl lysine isopeptide (Lys-Gly) (interchain with G-Cter in SUMO2); alternate cross-link involves residue Lys214. Lys214 is covalently cross-linked (Glycyl lysine isopeptide (Lys-Gly) (interchain with G-Cter in ubiquitin); alternate). 2 positions are modified to phosphothreonine: Thr220 and Thr221. The residue at position 224 (Ser224) is a Phosphoserine. Lys230 participates in a covalent cross-link: Glycyl lysine isopeptide (Lys-Gly) (interchain with G-Cter in SUMO2). The segment covering 231-243 has biased composition (pro residues); sequence PEPPAMPQPVPTA. At Thr242 the chain carries Phosphothreonine.

It belongs to the universal ribosomal protein uS3 family. In terms of assembly, component of the 40S small ribosomal subunit. Identified in a IGF2BP1-dependent mRNP granule complex containing untranslated mRNAs. Interacts with HNRPD. Interacts with PRMT1; the interaction methylates RPS3. Interacts with SUMO1; the interaction sumoylates RPS3. Interacts with UBC9. Interacts with CDK1; the interaction phosphorylates RPS3. Interacts with PRKCD; the interaction phosphorylates RPS3. Interacts with PKB/AKT; the interaction phosphorylates RPS3. Interacts with E2F1; the interaction occurs in the absence of nerve growth factor and increases transcription of pro-apoptotic proteins BCL2L11/BIM and HRK/Dp5. Interacts with the base excision repair proteins APEX1 and OGG1; interaction with OGG1 increases OGG1 N-glycosylase activity. Interacts with UNG; the interaction increases the uracil excision activity of UNG1. Interacts with HSP90; the interaction prevents the ubiquitination and proteasome-dependent degradation of RPS3 and is suppressed by increased ROS levels. Interacts with TOM70; the interaction promotes translocation of RPS3 to the mitochondrion. Interacts (via N-terminus) with RELA (via N-terminus); the interaction enhances the DNA-binding activity of the NF-kappa-B p65-p50 complex. Interacts with NFKBIA; the interaction is direct and may bridge the interaction between RPS3 and RELA. Interacts with IKKB; the interaction phosphorylates RPS3 and enhances its translocation to the nucleus. Interacts (via KH domain) with MDM2 and TP53. Interacts with TRADD. Interacts with ASCC3. Identified in a HCV IRES-mediated translation complex, at least composed of EIF3C, IGF2BP1, RPS3 and HCV RNA-replicon. Interacts with CRY1. Methylation by PRMT1 is required for import into the nucleolus and for ribosome assembly. Post-translationally, sumoylation by SUMO1 enhances protein stability through increased resistance to proteolysis. Sumoylation occurs at one or more of the three consensus sites, Lys-18, Lys-214 and Lys-230. In terms of processing, phosphorylation at Thr-221 by CDK1 occurs mainly in G2/M phase. Phosphorylation by PRKCD occurs on a non-ribosomal-associated form which results in translocation of RPS3 to the nucleus and enhances its endonuclease activity. Phosphorylated on Ser-209 by IKKB in response to activation of the NF-kappa-B p65-p50 complex which enhances the association of RPS3 with importin-alpha and mediates the nuclear translocation of RPS3. Phosphorylation by MAPK is required for translocation to the nucleus following exposure of cells to DNA damaging agents such as hydrogen peroxide. Phosphorylation by PKB/AKT mediates RPS3 nuclear translocation, enhances RPS3 endonuclease activity and suppresses RPS3-induced neuronal apoptosis. Ubiquitinated; ubiquitination is prevented by interaction with HSP90 which stabilizes the protein. Monoubiquitinated at Lys-214 by RNF10 and ZNF598 when a ribosome has stalled during translation of poly(A) sequences, leading to preclude synthesis of a long poly-lysine tail and initiate the ribosome quality control (RQC) pathway to degrade the potentially detrimental aberrant nascent polypeptide. Deubiquitinated at Lys-214 by USP10, preventing degradation by the proteasome and promoting 40S ribosome subunit recycling following ribosome dissociation. Post-translationally, ufmylated by UFL1.

The protein resides in the cytoplasm. The protein localises to the nucleus. It localises to the nucleolus. Its subcellular location is the mitochondrion inner membrane. It is found in the cytoskeleton. The protein resides in the spindle. It carries out the reaction 2'-deoxyribonucleotide-(2'-deoxyribose 5'-phosphate)-2'-deoxyribonucleotide-DNA = a 3'-end 2'-deoxyribonucleotide-(2,3-dehydro-2,3-deoxyribose 5'-phosphate)-DNA + a 5'-end 5'-phospho-2'-deoxyribonucleoside-DNA + H(+). With respect to regulation, endonuclease activity is inhibited by MgCl2 on apurinic/apyrimidinic DNA but not on UV-irradiated DNA. Component of the small ribosomal subunit. The ribosome is a large ribonucleoprotein complex responsible for the synthesis of proteins in the cell. Has endonuclease activity and plays a role in repair of damaged DNA. Cleaves phosphodiester bonds of DNAs containing altered bases with broad specificity and cleaves supercoiled DNA more efficiently than relaxed DNA. Displays high binding affinity for 7,8-dihydro-8-oxoguanine (8-oxoG), a common DNA lesion caused by reactive oxygen species (ROS). Has also been shown to bind with similar affinity to intact and damaged DNA. Stimulates the N-glycosylase activity of the base excision protein OGG1. Enhances the uracil excision activity of UNG1. Also stimulates the cleavage of the phosphodiester backbone by APEX1. When located in the mitochondrion, reduces cellular ROS levels and mitochondrial DNA damage. Has also been shown to negatively regulate DNA repair in cells exposed to hydrogen peroxide. Plays a role in regulating transcription as part of the NF-kappa-B p65-p50 complex where it binds to the RELA/p65 subunit, enhances binding of the complex to DNA and promotes transcription of target genes. Represses its own translation by binding to its cognate mRNA. Binds to and protects TP53/p53 from MDM2-mediated ubiquitination. Involved in spindle formation and chromosome movement during mitosis by regulating microtubule polymerization. Involved in induction of apoptosis through its role in activation of CASP8. Induces neuronal apoptosis by interacting with the E2F1 transcription factor and acting synergistically with it to up-regulate pro-apoptotic proteins BCL2L11/BIM and HRK/Dp5. Interacts with TRADD following exposure to UV radiation and induces apoptosis by caspase-dependent JNK activation. The chain is Small ribosomal subunit protein uS3 (RPS3) from Oryctolagus cuniculus (Rabbit).